Reading from the N-terminus, the 341-residue chain is Glyceraldehyde-3-phosphate dehydrogenase 2 (341 aa).

Residues 13 to 14 (RI), D35, and K85 each bind NAD(+). D-glyceraldehyde 3-phosphate is bound by residues 157 to 159 (SCT), T188, 217 to 218 (TG), and R240. C158 functions as the Nucleophile in the catalytic mechanism. NAD(+) is bound at residue N322.

Belongs to the glyceraldehyde-3-phosphate dehydrogenase family. Homotetramer.

It localises to the cytoplasm. It carries out the reaction D-glyceraldehyde 3-phosphate + phosphate + NAD(+) = (2R)-3-phospho-glyceroyl phosphate + NADH + H(+). The protein operates within carbohydrate degradation; glycolysis; pyruvate from D-glyceraldehyde 3-phosphate: step 1/5. The sequence is that of Glyceraldehyde-3-phosphate dehydrogenase 2 from Caenorhabditis briggsae.